The sequence spans 571 residues: MDKNEIILMLKNVSTSPGVYLWKDAKQNVLYVGKAKNLRKRMLQYFDGAINSYKTNKLVSLIYDFDVYICKTNKEALLLEKAMIDRYNPEFNILLLDDRKYPYLKVQLLKDSLLINLSRKVNAKDSKNTFYYGPFPSGYGAKPILKLLQHETLYENGLLIKNKDYNFWINQFNKIKEILSFKNNNYINELTNKMHQAANNMQFELALFLRDGLTYLKKLKESQIIELSQYKNIDVFAYKTDEKLIFATVLFYRYGILINKVNLTIPLGLSVDESLRVFFEQFYEDKILPDNLIVQEELLNFDLNLSSEYKFISPKIGTNKKVLDLAILNLNDYYEKEHLVIKNQLDKASNMLDSLNKYLNLPKLKNIVVFDNSNINNINPVGVAIVYTNGIKNKSLYRKFNLEALNERSADVEYIKQSISKFFSSNKNTKDYDLVIADGGIQQVNEAKKTLKTLNINIPVIGLVKNEFHKTKALIDLDMNEIHINDLELYNYLVQIQVEVDRFAKSHFRNRQKISSLEGKLRNIKGLGPNMEQNLLNHFKSYAKIYDASVEELSKIVPLNIAKSIKNKDYE.

Residues threonine 15–isoleucine 93 enclose the GIY-YIG domain. The UVR domain maps to asparagine 184–leucine 219.

This sequence belongs to the UvrC family. In terms of assembly, interacts with UvrB in an incision complex.

The protein resides in the cytoplasm. Its function is as follows. The UvrABC repair system catalyzes the recognition and processing of DNA lesions. UvrC both incises the 5' and 3' sides of the lesion. The N-terminal half is responsible for the 3' incision and the C-terminal half is responsible for the 5' incision. The sequence is that of UvrABC system protein C from Mycoplasmopsis bovis (strain ATCC 25523 / DSM 22781 / NCTC 10131 / PG45) (Mycoplasma bovis).